The primary structure comprises 218 residues: ATP phosphoribosyltransferase (218 aa).

It belongs to the ATP phosphoribosyltransferase family. Short subfamily. As to quaternary structure, heteromultimer composed of HisG and HisZ subunits.

The protein localises to the cytoplasm. The enzyme catalyses 1-(5-phospho-beta-D-ribosyl)-ATP + diphosphate = 5-phospho-alpha-D-ribose 1-diphosphate + ATP. Its pathway is amino-acid biosynthesis; L-histidine biosynthesis; L-histidine from 5-phospho-alpha-D-ribose 1-diphosphate: step 1/9. Its function is as follows. Catalyzes the condensation of ATP and 5-phosphoribose 1-diphosphate to form N'-(5'-phosphoribosyl)-ATP (PR-ATP). Has a crucial role in the pathway because the rate of histidine biosynthesis seems to be controlled primarily by regulation of HisG enzymatic activity. The polypeptide is ATP phosphoribosyltransferase (Lactiplantibacillus plantarum (strain ATCC BAA-793 / NCIMB 8826 / WCFS1) (Lactobacillus plantarum)).